The chain runs to 54 residues: Ovomucoid (54 aa).

In terms of domain architecture, Kazal-like spans 4 to 54; the sequence is VDCSDYPKPACTVEYMPLCGSDNKTYGNKCNFCNAVVDSNGTLTLSHFGKC. 3 disulfide bridges follow: Cys-6–Cys-36, Cys-14–Cys-33, and Cys-22–Cys-54. Asn-43 carries N-linked (GlcNAc...) asparagine glycosylation.

The protein localises to the secreted. The chain is Ovomucoid from Anser canagicus (Emperor goose).